Consider the following 971-residue polypeptide: uncharacterized protein (971 aa).

This is an uncharacterized protein from Caenorhabditis elegans.